A 612-amino-acid polypeptide reads, in one-letter code: Citryl-spermidine/3,4-dihydroxybenzoyl-citryl-spermidine:spermidine ligase (612 aa).

ATP-binding positions include 282-284, Lys-298, Arg-310, Tyr-390, and Glu-461; that span reads SMR.

It belongs to the IucA/IucC family. As to quaternary structure, homodimer.

It catalyses the reaction N(8)-citryl-spermidine + spermidine + ATP = N(8),N'(8)-citryl-bis(spermidine) + AMP + diphosphate + H(+). The enzyme catalyses N(1)-(3,4-dihydroxybenzoyl)-N(8)-citryl-spermidine + spermidine + ATP = N(1)-(3,4-dihydroxybenzoyl)-N(8),N'(8)-citryl-bis(spermidine) + AMP + diphosphate + H(+). It functions in the pathway siderophore biosynthesis; petrobactin biosynthesis. Involved in the biosynthesis of petrobactin, a catecholate siderophore that functions in both iron acquisition and virulence. Catalyzes the ATP-dependent condensation of spermidine with N(8)-citryl-spermidine or N(1)-(3,4-dihydroxbenzoyl)-N(8)-citryl-spermidine, two intermediates in petrobactin biosynthesis pathway. This Bacillus anthracis protein is Citryl-spermidine/3,4-dihydroxybenzoyl-citryl-spermidine:spermidine ligase.